A 110-amino-acid polypeptide reads, in one-letter code: LLSFLGEAARGTWDMIRAYNDMREANYIGADKYFHARGNYDAAKRGPGGAWAAKVISDARENFQRFTDRFSFGGSGRGAEDSRADQAANEWGRSGKDPNHFRPHGLPDKY.

The tract at residues 73–110 (GGSGRGAEDSRADQAANEWGRSGKDPNHFRPHGLPDKY) is disordered. The span at 93–110 (RSGKDPNHFRPHGLPDKY) shows a compositional bias: basic and acidic residues.

The protein belongs to the SAA family. This protein is the precursor of amyloid protein A, which is formed by the removal of residues from the C-terminal end. In terms of tissue distribution, expressed by the liver; secreted in plasma.

Major acute phase reactant. Apolipoprotein of the HDL complex. The sequence is that of Serum amyloid A protein (SAA1) from Equus caballus (Horse).